We begin with the raw amino-acid sequence, 374 residues long: Probable carboxylesterase 4, mitochondrial (374 aa).

The N-terminal 52 residues, 1–52 (MLRRITCSSSLASPSLFLRFFRQLPRSYSSPTTIAVSGRNIRRLSTPTTLRC), are a transit peptide targeting the mitochondrion. The Involved in the stabilization of the negatively charged intermediate by the formation of the oxyanion hole motif lies at 135-137 (HGG). Catalysis depends on residues S219, D317, and H349.

This sequence belongs to the 'GDXG' lipolytic enzyme family. In terms of tissue distribution, expressed in leaves, stems, flowers and siliques.

It is found in the mitochondrion. It carries out the reaction a carboxylic ester + H2O = an alcohol + a carboxylate + H(+). Carboxylesterase acting on esters with varying acyl chain length. The protein is Probable carboxylesterase 4, mitochondrial (CXE4) of Arabidopsis thaliana (Mouse-ear cress).